We begin with the raw amino-acid sequence, 370 residues long: GTPase Obg (370 aa).

The Obg domain maps to 1–159 (MKFIDEARIE…RMLRLELKVL (159 aa)). The 175-residue stretch at 160–334 (ADVGLLGMPN…LCYAIYDYLA (175 aa)) folds into the OBG-type G domain. GTP contacts are provided by residues 166 to 173 (GMPNAGKS), 191 to 195 (FTTLA), 213 to 216 (DIPG), 284 to 287 (NKLD), and 315 to 317 (SAL). Mg(2+)-binding residues include serine 173 and threonine 193. The tract at residues 344-370 (EEEDLATDVRFRDAPPADGGATPGDDA) is disordered.

This sequence belongs to the TRAFAC class OBG-HflX-like GTPase superfamily. OBG GTPase family. Monomer. It depends on Mg(2+) as a cofactor.

The protein resides in the cytoplasm. An essential GTPase which binds GTP, GDP and possibly (p)ppGpp with moderate affinity, with high nucleotide exchange rates and a fairly low GTP hydrolysis rate. Plays a role in control of the cell cycle, stress response, ribosome biogenesis and in those bacteria that undergo differentiation, in morphogenesis control. The chain is GTPase Obg from Burkholderia ambifaria (strain ATCC BAA-244 / DSM 16087 / CCUG 44356 / LMG 19182 / AMMD) (Burkholderia cepacia (strain AMMD)).